We begin with the raw amino-acid sequence, 263 residues long: MQTRLLRTLLSLTLSLLILSMALANRGCSNSSSQLLSQLQNQANLTGNTESLLEPYIRLQNLNTPDLRAACTQHSVAFPSEDTLRQLSKPHFLSTVYTTLDRVLYQLDALRQKFLKTPAFPKLDSARHNILGIRNNVFCMARLLNHSLEIPEPTQTDSGASRSTTTPDVFNTKIGSCGFLWGYHRFMGSVGRVFREWDDGSTRSRRQSPLRARRKGTRRIRVRHKGTRRIRVRRKGTRRIWVRRKGSRKIRPSRSTQSPTTRA.

The N-terminal stretch at 1 to 24 is a signal peptide; the sequence is MQTRLLRTLLSLTLSLLILSMALA. 2 disulfide bridges follow: Cys-28–Cys-139 and Cys-71–Cys-177. 3 N-linked (GlcNAc...) asparagine glycosylation sites follow: Asn-30, Asn-44, and Asn-145. Positions 207-263 are excised as a propeptide; the sequence is QSPLRARRKGTRRIRVRHKGTRRIRVRRKGTRRIWVRRKGSRKIRPSRSTQSPTTRA. Over residues 241–252 the composition is skewed to basic residues; sequence WVRRKGSRKIRP. The interval 241 to 263 is disordered; sequence WVRRKGSRKIRPSRSTQSPTTRA. A compositionally biased stretch (polar residues) spans 253–263; that stretch reads SRSTQSPTTRA.

It belongs to the LIF/OSM family. In terms of processing, propeptide processing is not important for receptor binding activity but may be important growth-inhibitory activity.

It is found in the secreted. Growth regulator. Inhibits the proliferation of a number of tumor cell lines. It regulates cytokine production, including IL-6, G-CSF and GM-CSF from endothelial cells. Uses only type II OSM receptor (heterodimers composed of OSMR and IL6ST). Involved in the maturation of fetal hepatocytes, thereby promoting liver development and regeneration. This is Oncostatin-M (Osm) from Mus musculus (Mouse).